Consider the following 426-residue polypeptide: 26S proteasome regulatory subunit 7 (426 aa).

ATP is bound at residue 209–216 (GPPGTGKT).

This sequence belongs to the AAA ATPase family.

It is found in the cytoplasm. It localises to the nucleus. The 26S proteasome is involved in the ATP-dependent degradation of ubiquitinated proteins. The regulatory (or ATPase) complex confers ATP dependency and substrate specificity to the 26S complex. This chain is 26S proteasome regulatory subunit 7 (RPT1), found in Spinacia oleracea (Spinach).